A 313-amino-acid chain; its full sequence is Cytochrome c biogenesis protein CcsA (313 aa).

8 helical membrane-spanning segments follow: residues 9 to 29 (ILTH…LITL), 44 to 64 (GIIV…ISSG), 71 to 91 (LYES…IPYF), 101 to 121 (IIGP…LTEI), 143 to 163 (MILG…LLVI), 217 to 237 (VISL…VWAN), 244 to 264 (WNWD…AIYL), and 278 to 298 (AIVA…VNLL).

Belongs to the CcmF/CycK/Ccl1/NrfE/CcsA family. In terms of assembly, may interact with Ccs1.

It localises to the plastid. The protein resides in the chloroplast thylakoid membrane. In terms of biological role, required during biogenesis of c-type cytochromes (cytochrome c6 and cytochrome f) at the step of heme attachment. The chain is Cytochrome c biogenesis protein CcsA from Nicotiana tomentosiformis (Tobacco).